The sequence spans 135 residues: Succinate dehydrogenase assembly factor 3, mitochondrial (135 aa).

Residues 1–12 (MRIFTRLLYAAP) constitute a mitochondrion transit peptide.

The protein belongs to the complex I LYR family. SDHAF3 subfamily. Interacts with the iron-sulfur protein subunit within the SDH catalytic dimer.

It localises to the mitochondrion matrix. In terms of biological role, plays an essential role in the assembly of succinate dehydrogenase (SDH), an enzyme complex (also referred to as respiratory complex II) that is a component of both the tricarboxylic acid (TCA) cycle and the mitochondrial electron transport chain, and which couples the oxidation of succinate to fumarate with the reduction of ubiquinone (coenzyme Q) to ubiquinol. Promotes maturation of the iron-sulfur protein subunit of the SDH catalytic dimer, protecting it from the deleterious effects of oxidants. May act together with SDHAF1. The protein is Succinate dehydrogenase assembly factor 3, mitochondrial of Emericella nidulans (strain FGSC A4 / ATCC 38163 / CBS 112.46 / NRRL 194 / M139) (Aspergillus nidulans).